The sequence spans 217 residues: Large ribosomal subunit protein uL3 (217 aa).

N5-methylglutamine is present on Gln-154.

The protein belongs to the universal ribosomal protein uL3 family. In terms of assembly, part of the 50S ribosomal subunit. Forms a cluster with proteins L14 and L19. Post-translationally, methylated by PrmB.

Functionally, one of the primary rRNA binding proteins, it binds directly near the 3'-end of the 23S rRNA, where it nucleates assembly of the 50S subunit. This is Large ribosomal subunit protein uL3 from Burkholderia ambifaria (strain ATCC BAA-244 / DSM 16087 / CCUG 44356 / LMG 19182 / AMMD) (Burkholderia cepacia (strain AMMD)).